Consider the following 329-residue polypeptide: Short-chain dehydrogenase/reductase prx4 (329 aa).

Positions 58, 60, and 81 each coordinate NADP(+). N91 is a glycosylation site (N-linked (GlcNAc...) asparagine). NADP(+) contacts are provided by D98, N121, K161, Y194, K198, and T229. Y194 acts as the Proton acceptor in catalysis. Catalysis depends on K198, which acts as the Lowers pKa of active site Tyr. Residues 238 to 258 form a helical membrane-spanning segment; it reads GPLMAAGLPVSSAHMVGLAVV.

It belongs to the short-chain dehydrogenases/reductases (SDR) family.

The protein resides in the membrane. It functions in the pathway sesquiterpene biosynthesis. Functionally, short-chain dehydrogenase/reductase; part of the gene cluster that mediates the biosynthesis of PR-toxin, a bicyclic sesquiterpene belonging to the eremophilane class and acting as a mycotoxin. The first step of the pathway is catalyzed by the aristolochene synthase which performs the cyclization of trans,trans-farnesyl diphosphate (FPP) to the bicyclic sesquiterpene aristolochene. Following the formation of aristolochene, the non-oxygenated aristolochene is converted to the trioxygenated intermediate eremofortin B, via 7-epi-neopetasone. This conversion appears to involve three enzymes, a hydroxysterol oxidase-like enzyme, the quinone-oxidase prx3 that forms the quinone-type-structure in the bicyclic nucleus of aristolochene with the C8-oxo group and the C-3 hydroxyl group, and the P450 monooxygenase ORF6 that introduces the epoxide at the double bond between carbons 1 and 2. No monoxy or dioxy-intermediates have been reported to be released to the broth, so these three early oxidative reactions may be coupled together. Eremofortin B is further oxidized by another P450 monooxygenase, that introduces a second epoxide between carbons 7 and 11 prior to acetylation to eremofortin A by the acetyltransferase ORF8. The second epoxidation may be performed by a second P450 monooxygenase. After the acetylation step, eremofortin A is converted to eremofortin C and then to PR-toxin. First the conversion of eremofortin A to eremofortin C proceeds by oxidation of the side chain of the molecule at C-12 and is catalyzed by the short-chain oxidoreductase prx1. The cytochrome P450 monooxygenase ORF6 is probably also involved in this step. The primary alcohol formed at C-12 is finally oxidized by the short-chain alcohol dehydrogenase prx4 that forms PR-toxin. The protein is Short-chain dehydrogenase/reductase prx4 of Penicillium roqueforti.